The following is a 714-amino-acid chain: Fatty acid oxidation complex subunit alpha (714 aa).

Residues 1–190 (MDTVSAFKLE…KAGLVDEVVP (190 aa)) form an enoyl-CoA hydratase region. The tract at residues 306 to 714 (GPLTSIAVLG…TFWPADERLT (409 aa)) is 3-hydroxyacyl-CoA dehydrogenase.

It in the N-terminal section; belongs to the enoyl-CoA hydratase/isomerase family. The protein in the central section; belongs to the 3-hydroxyacyl-CoA dehydrogenase family. Heterotetramer of two alpha chains (FadJ) and two beta chains (FadI).

It localises to the cytoplasm. It catalyses the reaction a (3S)-3-hydroxyacyl-CoA = a (2E)-enoyl-CoA + H2O. The catalysed reaction is a 4-saturated-(3S)-3-hydroxyacyl-CoA = a (3E)-enoyl-CoA + H2O. It carries out the reaction a (3S)-3-hydroxyacyl-CoA + NAD(+) = a 3-oxoacyl-CoA + NADH + H(+). The enzyme catalyses (3S)-3-hydroxybutanoyl-CoA = (3R)-3-hydroxybutanoyl-CoA. It functions in the pathway lipid metabolism; fatty acid beta-oxidation. In terms of biological role, catalyzes the formation of a hydroxyacyl-CoA by addition of water on enoyl-CoA. Also exhibits 3-hydroxyacyl-CoA epimerase and 3-hydroxyacyl-CoA dehydrogenase activities. The polypeptide is Fatty acid oxidation complex subunit alpha (Klebsiella pneumoniae (strain 342)).